Here is a 345-residue protein sequence, read N- to C-terminus: tRNA pseudouridine synthase B (345 aa).

Positions 1 to 33 (MGGNSQPHQEPRRVNNDPRAKQQKGNQVRRDRR) are disordered. Residues 9-20 (QEPRRVNNDPRA) show a composition bias toward basic and acidic residues. D72 acts as the Nucleophile in catalysis.

It belongs to the pseudouridine synthase TruB family. Type 1 subfamily.

The enzyme catalyses uridine(55) in tRNA = pseudouridine(55) in tRNA. Its function is as follows. Responsible for synthesis of pseudouridine from uracil-55 in the psi GC loop of transfer RNAs. This Bradyrhizobium diazoefficiens (strain JCM 10833 / BCRC 13528 / IAM 13628 / NBRC 14792 / USDA 110) protein is tRNA pseudouridine synthase B.